Reading from the N-terminus, the 604-residue chain is Arginine--tRNA ligase (604 aa).

Residues 142–152 carry the 'HIGH' region motif; the sequence is PNIAKEMHVGH.

It belongs to the class-I aminoacyl-tRNA synthetase family. Monomer.

The protein localises to the cytoplasm. It carries out the reaction tRNA(Arg) + L-arginine + ATP = L-arginyl-tRNA(Arg) + AMP + diphosphate. The protein is Arginine--tRNA ligase of Prochlorococcus marinus (strain MIT 9312).